The primary structure comprises 245 residues: Type II restriction enzyme EcoRV (245 aa).

Glu-45, Asp-74, and Asp-90 together coordinate Mg(2+). Residues Asp-74, Asp-90, and Lys-92 contribute to the active site.

In terms of assembly, homodimer. Mg(2+) is required as a cofactor.

It carries out the reaction Endonucleolytic cleavage of DNA to give specific double-stranded fragments with terminal 5'-phosphates.. Functionally, a P subtype restriction enzyme that recognizes the double-stranded sequence 5'-GATATC-3' and cleaves after T-3. This chain is Type II restriction enzyme EcoRV (ecoRVR), found in Escherichia coli.